The primary structure comprises 351 residues: Large ribosomal subunit protein uL3 (351 aa).

2 disordered regions span residues 1–31 (MGHRKLASPRRGSAGLRPRKRSSELLPTPRT) and 246–271 (KGSRKIGTRGPSLGTPSYTPQPGQLG).

The protein belongs to the universal ribosomal protein uL3 family. In terms of assembly, part of the 50S ribosomal subunit. Forms a cluster with proteins L14 and L24e.

Its function is as follows. One of the primary rRNA binding proteins, it binds directly near the 3'-end of the 23S rRNA, where it nucleates assembly of the 50S subunit. The protein is Large ribosomal subunit protein uL3 of Saccharolobus islandicus (strain M.16.27) (Sulfolobus islandicus).